The following is a 95-amino-acid chain: Protein TusB (95 aa).

It belongs to the DsrH/TusB family. In terms of assembly, heterohexamer, formed by a dimer of trimers. The hexameric TusBCD complex contains 2 copies each of TusB, TusC and TusD. The TusBCD complex interacts with TusE.

The protein resides in the cytoplasm. Its function is as follows. Part of a sulfur-relay system required for 2-thiolation of 5-methylaminomethyl-2-thiouridine (mnm(5)s(2)U) at tRNA wobble positions. The protein is Protein TusB of Shigella dysenteriae serotype 1 (strain Sd197).